We begin with the raw amino-acid sequence, 198 residues long: MAEKENTKRNRREEILQALAQMLESSDGSQRITTAKLAANVGVSEAALYRHFPSKTRMFDSLIEFIEDSLMSRINLILQDEKETFNRLRLILLLVLGFAERNPGLTRIMTGHALMFEQDRLQGRINQLFERIEVQLRQVLREKKLRDGQGFIHDEALLATQLLAFCEGMLSRFVRSEFRYRPTQEFDARWPLIVAQLQ.

The region spanning 9 to 70 (RNRREEILQA…SLIEFIEDSL (62 aa)) is the HTH tetR-type domain. Residues 33-52 (TTAKLAANVGVSEAALYRHF) constitute a DNA-binding region (H-T-H motif). Positions 119–144 (DRLQGRINQLFERIEVQLRQVLREKK) form a coiled coil.

This sequence belongs to the nucleoid occlusion factor SlmA family. Homodimer. Interacts with FtsZ.

It localises to the cytoplasm. Its subcellular location is the nucleoid. Its function is as follows. Required for nucleoid occlusion (NO) phenomenon, which prevents Z-ring formation and cell division over the nucleoid. Acts as a DNA-associated cell division inhibitor that binds simultaneously chromosomal DNA and FtsZ, and disrupts the assembly of FtsZ polymers. SlmA-DNA-binding sequences (SBS) are dispersed on non-Ter regions of the chromosome, preventing FtsZ polymerization at these regions. This is Nucleoid occlusion factor SlmA from Yersinia enterocolitica serotype O:8 / biotype 1B (strain NCTC 13174 / 8081).